The sequence spans 174 residues: Secretion monitor (174 aa).

An N-terminal signal peptide occupies residues 1 to 35 (MGILNLWRQFGRRYFWSHLLLGVVAASIGAPTILA).

This sequence belongs to the SecM family.

It localises to the cytoplasm. The protein resides in the cytosol. It is found in the periplasm. In terms of biological role, regulates secA expression by translational coupling of the secM secA operon. Translational pausing at a specific Pro residue 5 residues before the end of the protein may allow disruption of a mRNA repressor helix that normally suppresses secA translation initiation. The sequence is that of Secretion monitor from Photorhabdus laumondii subsp. laumondii (strain DSM 15139 / CIP 105565 / TT01) (Photorhabdus luminescens subsp. laumondii).